Here is a 291-residue protein sequence, read N- to C-terminus: Transmembrane O-methyltransferase (291 aa).

Residues 31–51 (VGTMSPAIALAFLPLVVTLLV) form a helical membrane-spanning segment. S-adenosyl-L-methionine is bound by residues Glu-137, 139–140 (GT), Ser-145, Glu-163, and Ser-193.

The protein belongs to the class I-like SAM-binding methyltransferase superfamily. Cation-dependent O-methyltransferase family. As to quaternary structure, interacts with LHFPL5, PCDH15, TMC1, TMC2 and TMIE. Interacts directly with TMC1. The interaction of TOMT with TMC1 and TMC2 is required for the transportation of TMC1/2 into the stereocilia of hair cells.

The protein localises to the membrane. Its subcellular location is the cytoplasm. The protein resides in the endoplasmic reticulum. It carries out the reaction a catechol + S-adenosyl-L-methionine = a guaiacol + S-adenosyl-L-homocysteine + H(+). Catalyzes the O-methylation, and thereby the inactivation, of catecholamine neurotransmitters and catechol hormones. Required for auditory function. Component of the cochlear hair cell's mechanotransduction (MET) machinery. Involved in the assembly of the asymmetric tip-link MET complex. Required for transportation of TMC1 and TMC2 proteins into the mechanically sensitive stereocilia of the hair cells. The function in MET is independent of the enzymatic activity. This is Transmembrane O-methyltransferase from Homo sapiens (Human).